The chain runs to 399 residues: Telomeric repeat-binding factor 2-interacting protein 1 (399 aa).

Residues 1–21 (MAEAMELGKDPNGPTHSSTLF) are disordered. Residue alanine 2 is modified to N-acetylalanine. Residues 10 to 101 (DPNGPTHSST…EKLELEAYRL (92 aa)) enclose the BRCT domain. Residues serine 36 and serine 43 each carry the phosphoserine modification. Lysine 114 is covalently cross-linked (Glycyl lysine isopeptide (Lys-Gly) (interchain with G-Cter in SUMO2)). The region spanning 130–190 (QSQAGRMVFT…SMKDRYLKRL (61 aa)) is the Myb-like domain. A phosphoserine mark is found at serine 156 and serine 158. Lysine 196 is covalently cross-linked (Glycyl lysine isopeptide (Lys-Gly) (interchain with G-Cter in SUMO2)). Disordered regions lie at residues 199–245 (LGEA…KEEI) and 279–309 (TMCD…VSAP). 2 positions are modified to phosphoserine: serine 205 and serine 208. Glycyl lysine isopeptide (Lys-Gly) (interchain with G-Cter in SUMO2) cross-links involve residues lysine 210, lysine 214, and lysine 242. The segment covering 281-304 (CDDDPCTPEEDSETQPDEEEEEEE) has biased composition (acidic residues). A Glycyl lysine isopeptide (Lys-Gly) (interchain with G-Cter in SUMO2) cross-link involves residue lysine 372. Residues 383–399 (KKFGAQNVARRIEFRKK) carry the Nuclear localization signal motif.

It belongs to the RAP1 family. As to quaternary structure, associates with the I-kappa-B-kinase (IKK) core complex, composed of CHUK, IKBKB and IKBKG. Homodimer. Component of the shelterin complex (telosome) composed of TERF1, TERF2, TINF2, TERF2IP ACD and POT1. Interacts with TERF2 (but not TERF1) with its C-terminus. Interacts with SLX4/BTBD12. Interacts with TERF2; the interaction is direct.

The protein resides in the nucleus. The protein localises to the cytoplasm. Its subcellular location is the chromosome. It is found in the telomere. In terms of biological role, acts both as a regulator of telomere function and as a transcription regulator. Involved in the regulation of telomere length and protection as a component of the shelterin complex (telosome). In contrast to other components of the shelterin complex, it is dispensible for telomere capping and does not participate in the protection of telomeres against non-homologous end-joining (NHEJ)-mediated repair. Instead, it is required to negatively regulate telomere recombination and is essential for repressing homology-directed repair (HDR), which can affect telomere length. Does not bind DNA directly: recruited to telomeric double-stranded 5'-TTAGGG-3' repeats via its interaction with TERF2. Independently of its function in telomeres, also acts as a transcription regulator: recruited to extratelomeric 5'-TTAGGG-3' sites via its association with TERF2 or other factors, and regulates gene expression. When cytoplasmic, associates with the I-kappa-B-kinase (IKK) complex and acts as a regulator of the NF-kappa-B signaling by promoting IKK-mediated phosphorylation of RELA/p65, leading to activate expression of NF-kappa-B target genes. The chain is Telomeric repeat-binding factor 2-interacting protein 1 (TERF2IP) from Bos taurus (Bovine).